We begin with the raw amino-acid sequence, 199 residues long: Phosphatidylethanolamine N-methyltransferase (199 aa).

At 2–12 (SWLLGYVDPTE) the chain is on the lumenal side. Residues 13–33 (PSFVAAVLTIVFNPLFWNVVA) constitute an intramembrane region (helical). Over 34–45 (RWEQRTRKLSRA) the chain is Lumenal. Residues 46–66 (FGSPYLACYSLGSIILLLNIL) traverse the membrane as a helical segment. Over 67 to 93 (RSHCFTQAMMSQPKMEGLDSHTIYFLG) the chain is Cytoplasmic. The chain crosses the membrane as a helical span at residues 94–114 (LALLGWGLVFVLSSFYALGFT). 98–100 (GWG) serves as a coordination point for S-adenosyl-L-methionine. The Lumenal segment spans residues 115–157 (GTFLGDYFGILKESRVTTFPFSVLDNPMYWGSTANYLGWALMH). A helical membrane pass occupies residues 158-178 (ASPTGLLLTVLVALVYVVALL). Topologically, residues 179 to 199 (FEEPFTAEIYRRKATRLHKRS) are cytoplasmic. 180–181 (EE) provides a ligand contact to S-adenosyl-L-methionine.

Belongs to the class VI-like SAM-binding methyltransferase superfamily. PEMT/PEM2 methyltransferase family. In terms of tissue distribution, expressed in liver (at protein level).

It is found in the endoplasmic reticulum membrane. Its subcellular location is the mitochondrion membrane. It carries out the reaction a 1,2-diacyl-sn-glycero-3-phosphoethanolamine + S-adenosyl-L-methionine = a 1,2-diacyl-sn-glycero-3-phospho-N-methylethanolamine + S-adenosyl-L-homocysteine + H(+). It catalyses the reaction a 1,2-diacyl-sn-glycero-3-phospho-N-methylethanolamine + S-adenosyl-L-methionine = a 1,2-diacyl-sn-glycero-3-phospho-N,N-dimethylethanolamine + S-adenosyl-L-homocysteine + H(+). The enzyme catalyses a 1,2-diacyl-sn-glycero-3-phospho-N,N-dimethylethanolamine + S-adenosyl-L-methionine = a 1,2-diacyl-sn-glycero-3-phosphocholine + S-adenosyl-L-homocysteine + H(+). The catalysed reaction is 1,2-di-(9Z-octadecenoyl)-sn-glycero-3-phosphoethanolamine + S-adenosyl-L-methionine = 1,2-di-(9Z-octadecenoyl)-sn-glycero-3-phospho-N-methylethanolamine + S-adenosyl-L-homocysteine + H(+). It carries out the reaction 1,2-di-(9Z-octadecenoyl)-sn-glycero-3-phospho-N-methylethanolamine + S-adenosyl-L-methionine = 1,2-di-(9Z-octadecenoyl)-sn-glycero-3-phospho-N,N-dimethylethanolamine + S-adenosyl-L-homocysteine + H(+). It catalyses the reaction 1,2-di-(9Z-octadecenoyl)-sn-glycero-3-phospho-N,N-dimethylethanolamine + S-adenosyl-L-methionine = 1,2-di-(9Z-octadecenoyl)-sn-glycero-3-phosphocholine + S-adenosyl-L-homocysteine + H(+). The enzyme catalyses 1,2-di-(9Z,12Z-octadecadienoyl)-sn-glycero-3-phosphoethanolamine + S-adenosyl-L-methionine = 1,2-di-(9Z,12Z-octadecadienoyl)-sn-glycero-3-phospho-N-methylethanolamine + S-adenosyl-L-homocysteine + H(+). The catalysed reaction is 1,2-di-(9Z,12Z-octadecadienoyl)-sn-glycero-3-phospho-N-methylethanolamine + S-adenosyl-L-methionine = 1,2-di-(9Z,12Z-octadecadienoyl)-sn-glycero-3-phospho-N,N-dimethylethanolamine + S-adenosyl-L-homocysteine + H(+). It carries out the reaction 1,2-di-(9Z,12Z-octadecadienoyl)-sn-glycero-3-phospho-N,N-dimethylethanolamine + S-adenosyl-L-methionine = 1,2-di-(9Z,12Z-octadecadienoyl)-sn-glycero-3-phosphocholine + S-adenosyl-L-homocysteine + H(+). It catalyses the reaction 1,2-di-(9Z,12Z,15Z-octadecatrienoyl)-sn-glycero-3-phosphoethanolamine + S-adenosyl-L-methionine = 1,2-di-(9Z,12Z,15Z-octadecatrienoyl)-sn-glycero-3-phospho-N-methylethanolamine + S-adenosyl-L-homocysteine + H(+). The enzyme catalyses 1,2-di-(9Z,12Z,15Z-octadecatrienoyl)-sn-glycero-3-phospho-N-methylethanolamine + S-adenosyl-L-methionine = 1,2-di-(9Z,12Z,15Z-octadecatrienoyl)-sn-glycero-3-phospho-N,N-dimethylethanolamine + S-adenosyl-L-homocysteine + H(+). The catalysed reaction is 1,2-di-(9Z,12Z,15Z-octadecatrienoyl)-sn-glycero-3-phospho-N,N-dimethylethanolamine + S-adenosyl-L-methionine = 1,2-di-(9Z,12Z,15Z-octadecatrienoyl)-sn-glycero-3-phosphocholine + S-adenosyl-L-homocysteine + H(+). It carries out the reaction 1-hexadecanoyl-2-(4Z,7Z,10Z,13Z,16Z,19Z-docosahexaenoyl)-sn-glycero-3-phosphoethanolamine + S-adenosyl-L-methionine = 1-hexadecanoyl-2-(4Z,7Z,10Z,13Z,16Z,19Z-docosahexaenoyl)-sn-glycero-3-phospho-N-methylethanolamine + S-adenosyl-L-homocysteine + H(+). It catalyses the reaction 1-hexadecanoyl-2-(4Z,7Z,10Z,13Z,16Z,19Z-docosahexaenoyl)-sn-glycero-3-phospho-N-methylethanolamine + S-adenosyl-L-methionine = 1-hexadecanoyl-2-(4Z,7Z,10Z,13Z,16Z,19Z-docosahexaenoyl)-sn-glycero-3-phospho-N,N-dimethylethanolamine + S-adenosyl-L-homocysteine + H(+). The enzyme catalyses 1-hexadecanoyl-2-(4Z,7Z,10Z,13Z,16Z,19Z-docosahexaenoyl)-sn-glycero-3-phospho-N,N-dimethylethanolamine + S-adenosyl-L-methionine = 1-hexadecanoyl-2-(4Z,7Z,10Z,13Z,16Z,19Z-docosahexaenoyl)-sn-glycero-3-phosphocholine + S-adenosyl-L-homocysteine + H(+). Its pathway is phospholipid metabolism; phosphatidylcholine biosynthesis. Its function is as follows. Catalyzes the three sequential steps of the methylation pathway for the biosynthesis of phosphatidylcholine, a critical and essential component for membrane structure. Uses S-adenosylmethionine (S-adenosyl-L-methionine, SAM or AdoMet) as the methyl group donor for the methylation of phosphatidylethanolamine (1,2-diacyl-sn-glycero-3-phosphoethanolamine, PE) to phosphatidylmonomethylethanolamine (1,2-diacyl-sn-glycero-3-phospho-N-methylethanolamine, PMME), PMME to phosphatidyldimethylethanolamine (1,2-diacyl-sn-glycero-3-phospho-N,N-dimethylethanolamine, PDME), and PDME to phosphatidylcholine (1,2-diacyl-sn-glycero-3-phosphocholine, PC), producing S-adenosyl-L-homocysteine in each step. The chain is Phosphatidylethanolamine N-methyltransferase from Rattus norvegicus (Rat).